Consider the following 206-residue polypeptide: LexA repressor (206 aa).

The segment at residues 28–48 is a DNA-binding region (H-T-H motif); the sequence is RAEIATRLGFKSANAAEEHLK. Catalysis depends on for autocatalytic cleavage activity residues Ser-123 and Lys-160.

Belongs to the peptidase S24 family. Homodimer.

It catalyses the reaction Hydrolysis of Ala-|-Gly bond in repressor LexA.. In terms of biological role, represses a number of genes involved in the response to DNA damage (SOS response), including recA and lexA. In the presence of single-stranded DNA, RecA interacts with LexA causing an autocatalytic cleavage which disrupts the DNA-binding part of LexA, leading to derepression of the SOS regulon and eventually DNA repair. The polypeptide is LexA repressor (Shewanella putrefaciens (strain CN-32 / ATCC BAA-453)).